We begin with the raw amino-acid sequence, 866 residues long: MPAVSLPPKENALFKRILRCYEHKQYRNGLKFCKQILSNPKFAEHGETLAMKGLTLNCLGKKEEAYELVRRGLRNDLKSHVCWHVYGLLQRSDKKYDEAIKCYRNALKWDKDNLQILRDLSLLQIQMRDLEGYRETRYQLLQLRPAQRASWIGYAIAYHLLEDYEMAAKILEEFRKTQQTSPDKVDYEYSELLLYQNQVLREAGLYREALEHLCTYEKQICDKLAVEETKGELLLQLCRLEDAADVYRGLQERNPENWAYYKGLEKALKPANMLERLKIYEEAWTKYPRGLVPRRLPLNFLSGEKFKECLDKFLRMNFSKGCPPVFNTLRSLYKDKEKVAIIEELVVGYETSLKSCRLFNPNDDGKEEPPTTLLWVQYYLAQHYDKIGQPSIALEYINTAIESTPTLIELFLVKAKIYKHAGNIKEAARWMDEAQALDTADRFINSKCAKYMLKANLIKEAEEMCSKFTREGTSAVENLNEMQCMWFQTECAQAYKAMNKFGEALKKCHEIERHFIEITDDQFDFHTYCMRKITLRSYVDLLKLEDVLRQHPFYFKAARIAIEIYLKLHDNPLTDENKEHEADTANMSDKELKKLRNKQRRAQKKAQIEEEKKNAEKEKQQRNQKKKKDDDDEEIGGPKEELIPEKLAKVETPLEEAIKFLTPLKNLVKNKIETHLFAFEIYFRKEKFLLMLQSVKRAFAIDSSHPWLHECMIRLFNTAVCESKDLSDTVRTVLKQEMNRLFGATNPKNFNETFLKRNSDSLPHRLSAAKMVYYLDPSSQKRAIELATTLDESLTNRNLQTCMEVLEALYDGSLGDCKEAAEIYRANCHKLFPYALAFMPPGYEEDMKITVNGDSSAEAEELANEI.

TPR repeat units lie at residues 46-79 (GETL…DLKS), 80-113 (HVCW…DKDN), 148-184 (RASW…SPDK), and 224-257 (LAVE…NPEN). Lys262 carries the N6-acetyllysine modification. A Phosphoserine modification is found at Ser302. 3 TPR repeats span residues 374–407 (LWVQ…TPTL), 409–441 (ELFL…DTAD), and 485–518 (MWFQ…FIEI). The interval 500-866 (KFGEALKKCH…AEAEELANEI (367 aa)) is interaction with HYPK. Residues Ser537 and Ser588 each carry the phosphoserine modification. Residues 579 to 594 (EHEADTANMSDKELKK) are compositionally biased toward basic and acidic residues. Positions 579 to 642 (EHEADTANMS…EEIGGPKEEL (64 aa)) are disordered. Over residues 595-604 (LRNKQRRAQK) the composition is skewed to basic residues. Basic and acidic residues predominate over residues 606-621 (AQIEEEKKNAEKEKQQ). The Bipartite nuclear localization signal signature appears at 612-629 (KKNAEKEKQQRNQKKKKD). The stretch at 672 to 705 (IETHLFAFEIYFRKEKFLLMLQSVKRAFAIDSSH) is one TPR 8 repeat. N6-acetyllysine is present on residues Lys735 and Lys756. Ser855 and Ser856 each carry phosphoserine.

In terms of assembly, component of the N-terminal acetyltransferase A complex (also called the NatA complex) composed of NAA10 and NAA15. Within the complex interacts with NAA10. Component of the N-terminal acetyltransferase A (NatA)/HYPK complex at least composed of NAA10, NAA15 and HYPK, which has N-terminal acetyltransferase activity. In complex with NAA10, interacts with HYPK. Component of the N-terminal acetyltransferase E (NatE) complex at least composed of NAA10, NAA15 and NAA50. Within the complex interacts with NAA10; the interaction is required for binding to NAA50. Interacts with NAAT50. The interaction of the NatA complex with NAA50 reduces the acetylation activity of the NatA complex. Component of the N-terminal acetyltransferase E (NatE)/HYPK complex at least composed of NAA10, NAA15, NAA50 and HYPK. In complex with NAA10 interacts with HYPK; the interaction with HYPK reduces the capacity of the NatA complex to interact with NAA50. Interacts with NAA11. Interacts with XRCC6 and XRCC5. Cleaved by caspases during apoptosis, resulting in a stable 35 kDa fragment. Expressed at high levels in testis and in ocular endothelial cells. Also found in brain (corpus callosum), heart, colon, bone marrow and at lower levels in most adult tissues, including thyroid, liver, pancreas, mammary and salivary glands, lung, ovary, urogenital system and upper gastrointestinal tract. Overexpressed in gastric cancer, in papillary thyroid carcinomas and in a Burkitt lymphoma cell line (Daudi). Specifically suppressed in abnormal proliferating blood vessels in eyes of patients with proliferative diabetic retinopathy.

Its subcellular location is the cytoplasm. It localises to the nucleus. In terms of biological role, auxillary subunit of N-terminal acetyltransferase complexes which display alpha (N-terminal) acetyltransferase (NAT) activity. The NAT activity may be important for vascular, hematopoietic and neuronal growth and development. Required to control retinal neovascularization in adult ocular endothelial cells. In complex with XRCC6 and XRCC5 (Ku80), up-regulates transcription from the osteocalcin promoter. In Homo sapiens (Human), this protein is N-alpha-acetyltransferase 15, NatA auxiliary subunit (NAA15).